A 38-amino-acid chain; its full sequence is Plastocyanin (38 aa).

Positions 1–38 (AQTVEVKMGADGGLLVFEPAKAGPHNVVFDEDNIPPGV) constitute a Plastocyanin-like domain. His25 contributes to the Cu cation binding site.

The protein belongs to the plastocyanin family. Cu(2+) serves as cofactor.

Its subcellular location is the plastid. It localises to the chloroplast thylakoid membrane. In terms of biological role, participates in electron transfer between P700 and the cytochrome b6-f complex in photosystem I. The chain is Plastocyanin (PETE) from Thalassiosira oceanica (Marine diatom).